Reading from the N-terminus, the 203-residue chain is Somatotropin (203 aa).

Positions 1–17 are cleaved as a signal peptide; that stretch reads MDRVVLMLSVLSLGVSS. Residue glutamine 18 is modified to Pyrrolidone carboxylic acid. Histidine 36 lines the Zn(2+) pocket. Cysteines 68 and 176 form a disulfide. Glutamate 185 is a binding site for Zn(2+). A disulfide bridge connects residues cysteine 193 and cysteine 201.

The protein belongs to the somatotropin/prolactin family.

The protein resides in the secreted. In terms of biological role, growth hormone plays an important role in growth control and is involved in the regulation of several anabolic processes. Implicated as an osmoregulatory substance important for seawater adaptation. The protein is Somatotropin (gh) of Pagrus major (Red sea bream).